Reading from the N-terminus, the 268-residue chain is Undecaprenyl-diphosphatase (268 aa).

Helical transmembrane passes span 5 to 25 (SIIS…IPVS), 43 to 63 (GNTF…LVYF), 84 to 104 (LSVL…HGFI), 109 to 129 (FETP…LYVI), 184 to 204 (AAEF…ALDL), 213 to 233 (IDDI…GIFV), and 248 to 268 (PFAI…WLLG).

It belongs to the UppP family.

It is found in the cell inner membrane. The catalysed reaction is di-trans,octa-cis-undecaprenyl diphosphate + H2O = di-trans,octa-cis-undecaprenyl phosphate + phosphate + H(+). Catalyzes the dephosphorylation of undecaprenyl diphosphate (UPP). Confers resistance to bacitracin. In Sinorhizobium medicae (strain WSM419) (Ensifer medicae), this protein is Undecaprenyl-diphosphatase.